The primary structure comprises 365 residues: 3-dehydroquinate synthase (365 aa).

NAD(+) is bound by residues 69-74 (DGEAHK), 103-107 (GVIGD), 127-128 (TT), Lys-140, Lys-149, and 167-170 (TLNT). Zn(2+) contacts are provided by Glu-182, His-245, and His-262.

It belongs to the sugar phosphate cyclases superfamily. Dehydroquinate synthase family. Requires Co(2+) as cofactor. Zn(2+) serves as cofactor. It depends on NAD(+) as a cofactor.

It is found in the cytoplasm. It catalyses the reaction 7-phospho-2-dehydro-3-deoxy-D-arabino-heptonate = 3-dehydroquinate + phosphate. It participates in metabolic intermediate biosynthesis; chorismate biosynthesis; chorismate from D-erythrose 4-phosphate and phosphoenolpyruvate: step 2/7. Catalyzes the conversion of 3-deoxy-D-arabino-heptulosonate 7-phosphate (DAHP) to dehydroquinate (DHQ). The chain is 3-dehydroquinate synthase from Pseudomonas putida (strain W619).